We begin with the raw amino-acid sequence, 441 residues long: Tubulin alpha chain (441 aa).

GTP contacts are provided by Gln-11, Glu-68, Ser-137, Gly-141, Thr-142, Thr-176, Asn-203, and Asn-224. A Mg(2+)-binding site is contributed by Glu-68. Glu-250 is an active-site residue.

The protein belongs to the tubulin family. In terms of assembly, dimer of alpha and beta chains. A typical microtubule is a hollow water-filled tube with an outer diameter of 25 nm and an inner diameter of 15 nM. Alpha-beta heterodimers associate head-to-tail to form protofilaments running lengthwise along the microtubule wall with the beta-tubulin subunit facing the microtubule plus end conferring a structural polarity. Microtubules usually have 13 protofilaments but different protofilament numbers can be found in some organisms and specialized cells. Requires Mg(2+) as cofactor.

Its subcellular location is the cytoplasm. The protein resides in the cytoskeleton. It catalyses the reaction GTP + H2O = GDP + phosphate + H(+). Its function is as follows. Tubulin is the major constituent of microtubules, a cylinder consisting of laterally associated linear protofilaments composed of alpha- and beta-tubulin heterodimers. Microtubules grow by the addition of GTP-tubulin dimers to the microtubule end, where a stabilizing cap forms. Below the cap, tubulin dimers are in GDP-bound state, owing to GTPase activity of alpha-tubulin. In Encephalitozoon cuniculi (strain GB-M1) (Microsporidian parasite), this protein is Tubulin alpha chain (TUB1).